A 116-amino-acid polypeptide reads, in one-letter code: Large ribosomal subunit protein bL20c (116 aa).

It belongs to the bacterial ribosomal protein bL20 family.

It is found in the plastid. Its subcellular location is the chloroplast. In terms of biological role, binds directly to 23S ribosomal RNA and is necessary for the in vitro assembly process of the 50S ribosomal subunit. It is not involved in the protein synthesizing functions of that subunit. The chain is Large ribosomal subunit protein bL20c (rpl20) from Marchantia polymorpha (Common liverwort).